The chain runs to 458 residues: Elongation factor 1-alpha 1 (458 aa).

N,N,N-trimethylglycine is present on glycine 2. N6,N6-dimethyllysine; alternate is present on lysine 3. Residue lysine 3 is modified to N6-methyllysine; alternate. In terms of domain architecture, tr-type G spans 5 to 240 (KTHVNVVVIG…DAIEPPTRPT (236 aa)). Positions 14 to 21 (GHVDSGKS) are G1. 14-21 (GHVDSGKS) contributes to the GTP binding site. At lysine 30 the chain carries N6-methyllysine. The interval 70 to 74 (GITID) is G2. Position 79 is an N6,N6,N6-trimethyllysine (lysine 79). The tract at residues 91–94 (DAPG) is G3. GTP contacts are provided by residues 91-95 (DAPGH) and 153-156 (NKMD). Residues 153–156 (NKMD) form a G4 region. Positions 192 to 194 (SGW) are G5. Lysine 316 bears the N6,N6-dimethyllysine; alternate mark. At lysine 316 the chain carries N6-methyllysine; alternate. The residue at position 390 (lysine 390) is an N6-methyllysine.

The protein belongs to the TRAFAC class translation factor GTPase superfamily. Classic translation factor GTPase family. EF-Tu/EF-1A subfamily.

The protein resides in the cytoplasm. In terms of biological role, this protein promotes the GTP-dependent binding of aminoacyl-tRNA to the A-site of ribosomes during protein biosynthesis. The polypeptide is Elongation factor 1-alpha 1 (TEF1) (Candida albicans (strain SC5314 / ATCC MYA-2876) (Yeast)).